The chain runs to 258 residues: Aspartate/glutamate leucyltransferase (258 aa).

It belongs to the R-transferase family. Bpt subfamily.

It localises to the cytoplasm. It catalyses the reaction N-terminal L-glutamyl-[protein] + L-leucyl-tRNA(Leu) = N-terminal L-leucyl-L-glutamyl-[protein] + tRNA(Leu) + H(+). The catalysed reaction is N-terminal L-aspartyl-[protein] + L-leucyl-tRNA(Leu) = N-terminal L-leucyl-L-aspartyl-[protein] + tRNA(Leu) + H(+). Functions in the N-end rule pathway of protein degradation where it conjugates Leu from its aminoacyl-tRNA to the N-termini of proteins containing an N-terminal aspartate or glutamate. This is Aspartate/glutamate leucyltransferase from Rhodopseudomonas palustris (strain BisB18).